The sequence spans 177 residues: Inorganic pyrophosphatase (177 aa).

Residues lysine 30, arginine 44, and tyrosine 56 each coordinate substrate. Mg(2+)-binding residues include aspartate 66, aspartate 71, and aspartate 103. Tyrosine 142 is a substrate binding site.

The protein belongs to the PPase family. Homohexamer. The cofactor is Mg(2+).

The protein localises to the cytoplasm. The catalysed reaction is diphosphate + H2O = 2 phosphate + H(+). In terms of biological role, catalyzes the hydrolysis of inorganic pyrophosphate (PPi) forming two phosphate ions. The sequence is that of Inorganic pyrophosphatase from Agrobacterium fabrum (strain C58 / ATCC 33970) (Agrobacterium tumefaciens (strain C58)).